A 695-amino-acid chain; its full sequence is Follicle-stimulating hormone receptor (695 aa).

The signal sequence occupies residues 1 to 17 (MALFLVALLAFLSLGSG). 2 disulfides stabilise this stretch: C18/C25 and C23/C32. The 29-residue stretch at 18 to 46 (CHHRLCHCSNGVFLCQDSKVTEMPSDLPR) folds into the LRRNT domain. The Extracellular segment spans residues 18 to 366 (CHHRLCHCSN…EDIMGYDILR (349 aa)). 9 LRR repeats span residues 48-70 (AVELRFVLTKLRVIPEGAFSGFG), 71-93 (DLEKIEISQNDVLEVIEANVFSN), 96-118 (KLHEIRIEKANNLLYIDPDAFQN), 121-142 (NLRYLLISNTGIKHLPAVHKIQ), 143-167 (SLQKVLLDIQDNINIHTVERNSFMG), 171-192 (ESMIVWLSKNGIQEIHNCAFNG), 194-216 (QLDELNLSDNSNLEELPNDVFQG), 219-239 (GPVILDISRTRIRSLPSYGLE), and 240-262 (NLKKLRAKSTYHLKKLPSLEKFV). 2 N-linked (GlcNAc...) asparagine glycosylation sites follow: N191 and N199. 4 disulfides stabilise this stretch: C275/C346, C276/C292, C276/C356, and C292/C338. The N-linked (GlcNAc...) asparagine glycan is linked to N293. Position 335 is a sulfotyrosine (Y335). The helical transmembrane segment at 367 to 387 (VLIWFISILAITGNILVLVIL) threads the bilayer. Residues 388–398 (ITSQYKLTVPR) are Cytoplasmic-facing. Residues 399-421 (FLMCNLAFADLCIGIYLLLIASV) traverse the membrane as a helical segment. The Extracellular segment spans residues 422-443 (DVHTKSQYHNYAIDWQTGAGCD). A disulfide bond links C442 and C517. The chain crosses the membrane as a helical span at residues 444 to 465 (AAGFFTVFASELSVYTLTAITL). Over 466 to 485 (ERWHTITHAMQLECKVHVRH) the chain is Cytoplasmic. Residues 486–508 (AASIMLVGWVFAFAVALFPIFGI) traverse the membrane as a helical segment. The Extracellular segment spans residues 509 to 528 (SSYMKVSICLPMDIDSPLSQ). A helical transmembrane segment spans residues 529–550 (LYVMSLLVLNVLAFVVICGCYT). Residues 551–573 (HIYLTVRNPNITSSSSDTKIAKR) lie on the Cytoplasmic side of the membrane. A helical transmembrane segment spans residues 574–597 (MAMLIFTDFLCMAPISFFAISASL). Residues 598–608 (KVPLITVSKSK) lie on the Extracellular side of the membrane. The helical transmembrane segment at 609-630 (ILLVLFYPINSCANPFLYAIFT) threads the bilayer. Topologically, residues 631–695 (RNFRRDFFIL…LIPLRHLAKN (65 aa)) are cytoplasmic.

This sequence belongs to the G-protein coupled receptor 1 family. FSH/LSH/TSH subfamily. In terms of assembly, homotrimer. Functions as a homotrimer binding the FSH hormone heterodimer composed of CGA and FSHB. Interacts with ARRB2. Interacts with APPL2; interaction is independent of follicle stimulating hormone stimulation. In terms of processing, N-glycosylated; indirectly required for FSH-binding, possibly via a conformational change that allows high affinity binding of hormone. Post-translationally, sulfated. As to expression, isoform FSH-R3 is expressed in ovary and testis, but not in kidney (at protein level).

It localises to the cell membrane. Its function is as follows. G protein-coupled receptor for follitropin, the follicle-stimulating hormone. The activity of isoform FSH-R1 is mediated by G proteins which activate adenylate cyclase. Isoform FSH-R2 and isoform FSH-R3 also bind FSH, but this does not result in activation of adenylate cyclase. Isoform FSH-R3 may be involved in calcium signaling. Through cAMP production activates the downstream PI3K-AKT and ERK1/ERK2 signaling pathways. In Ovis aries (Sheep), this protein is Follicle-stimulating hormone receptor (FSHR).